A 577-amino-acid chain; its full sequence is Aspartate--tRNA(Asp/Asn) ligase (577 aa).

E171 contributes to the L-aspartate binding site. Residues 195-198 (QLFK) form an aspartate region. Residue R217 participates in L-aspartate binding. Residues 217–219 (RDE) and Q226 contribute to the ATP site. Position 444 (H444) interacts with L-aspartate. E474 is an ATP binding site. R481 lines the L-aspartate pocket. 526–529 (GFDR) contacts ATP.

It belongs to the class-II aminoacyl-tRNA synthetase family. Type 1 subfamily. Homodimer.

Its subcellular location is the cytoplasm. It catalyses the reaction tRNA(Asx) + L-aspartate + ATP = L-aspartyl-tRNA(Asx) + AMP + diphosphate. Functionally, aspartyl-tRNA synthetase with relaxed tRNA specificity since it is able to aspartylate not only its cognate tRNA(Asp) but also tRNA(Asn). Is 1.7 times more efficient at aminoacylating tRNA(Asp) over tRNA(Asn). Reaction proceeds in two steps: L-aspartate is first activated by ATP to form Asp-AMP and then transferred to the acceptor end of tRNA(Asp/Asn). The sequence is that of Aspartate--tRNA(Asp/Asn) ligase from Helicobacter pylori (strain ATCC 700392 / 26695) (Campylobacter pylori).